We begin with the raw amino-acid sequence, 185 residues long: Inner membrane-spanning protein YciB (185 aa).

The next 5 membrane-spanning stretches (helical) occupy residues 27–47, 53–73, 76–96, 118–138, and 149–169; these read IVLVVATILQIVILKWKYGIV, IMASAVVFFGLLTAYFNEIRY, WKVTIINGLFAIVLLVAQFQF, TLNLGWALFFIICMLVNIYIS, and FKSFGIIGMTVIATIISGVYI.

It belongs to the YciB family.

It is found in the cell inner membrane. Functionally, plays a role in cell envelope biogenesis, maintenance of cell envelope integrity and membrane homeostasis. The chain is Inner membrane-spanning protein YciB from Haemophilus influenzae (strain 86-028NP).